The primary structure comprises 562 residues: MKALLRALIGQGIEALRANGTLPADTLPPDFVVERPKTREHGDFATNAAMLLAKAARSNPRALAQALLAALPASDDVAKVEIAGPGFINFHLAPTAYQREVAHVIKQGHDYGRGLAGNGRSVGVEYVSANPTGPLHVGHGRAAAIGDSLARVLDANGWNVKREFYYNDAGVQIENLALSVQARAQGLTPDSDGWPENGYRGDYIADVANAYLAGDTVDLEGHLVTGTKDPADLESIRRFAVAYLRNEQNHDLAAFRVDFDIYFLESSLYKDGKVEEAVQKLIASGHTYEEGGALWLKSTDFGDDKDRVMRKSDGTYTYFVPDVAYHLTKWQRGYERAITELGADHHGSLTRVRAGLQAMELGIPQGWPEYVLHQMVTVMRGGEEVKLSKRAGSYVTLRDLIEETSADAVRWFLIARKPDSQLTFDIDLARAQSNDNPVFYVQYAHARVCSVLRQAQEKGYKYDQAHGLAELACLDDEHSLAVMLELSRYPEVVEIAGQALEPYQIAQYLRELAHAFHTWYHNSKVLVDAAAERDAKLTLAVATQQVLANGLELLGVSAPEKM.

The short motif at 129-139 (ANPTGPLHVGH) is the 'HIGH' region element.

This sequence belongs to the class-I aminoacyl-tRNA synthetase family. In terms of assembly, monomer.

It is found in the cytoplasm. It carries out the reaction tRNA(Arg) + L-arginine + ATP = L-arginyl-tRNA(Arg) + AMP + diphosphate. In Xanthomonas axonopodis pv. citri (strain 306), this protein is Arginine--tRNA ligase.